The sequence spans 846 residues: DNA mismatch repair protein MutS (846 aa).

610–617 (GPNMGGKS) lines the ATP pocket.

The protein belongs to the DNA mismatch repair MutS family.

Functionally, this protein is involved in the repair of mismatches in DNA. It is possible that it carries out the mismatch recognition step. This protein has a weak ATPase activity. This Legionella pneumophila (strain Paris) protein is DNA mismatch repair protein MutS.